The following is a 382-amino-acid chain: Anthranilate O-methyltransferase 1 (382 aa).

Tyrosine 20 provides a ligand contact to S-adenosyl-L-homocysteine. Glutamine 27 is a binding site for anthranilate. Cysteine 61, asparagine 66, aspartate 102, leucine 103, serine 146, and tyrosine 147 together coordinate S-adenosyl-L-homocysteine. Tryptophan 168 serves as a coordination point for anthranilate. Residues glutamate 268 and phenylalanine 270 each contribute to the Mg(2+) site.

This sequence belongs to the methyltransferase superfamily. Type-7 methyltransferase family. SABATH subfamily.

It catalyses the reaction anthranilate + S-adenosyl-L-methionine = O-methyl anthranilate + S-adenosyl-L-homocysteine. Its function is as follows. Methyltransferase involved in the biosynthesis of methyl anthranilate in response to stresses. Utilizes anthranilic acid as substrate, but not salicylic acid. Produces exclusively the O-methyl ester. The chain is Anthranilate O-methyltransferase 1 (AAMT1) from Zea mays (Maize).